The sequence spans 233 residues: tRNA (guanine-N(7)-)-methyltransferase (233 aa).

4 residues coordinate S-adenosyl-L-methionine: glutamate 62, glutamate 87, aspartate 116, and aspartate 138. Aspartate 138 is a catalytic residue. Substrate is bound by residues lysine 142, aspartate 174, and 212 to 215 (TRYE).

Belongs to the class I-like SAM-binding methyltransferase superfamily. TrmB family.

The enzyme catalyses guanosine(46) in tRNA + S-adenosyl-L-methionine = N(7)-methylguanosine(46) in tRNA + S-adenosyl-L-homocysteine. It participates in tRNA modification; N(7)-methylguanine-tRNA biosynthesis. Its function is as follows. Catalyzes the formation of N(7)-methylguanine at position 46 (m7G46) in tRNA. The sequence is that of tRNA (guanine-N(7)-)-methyltransferase from Bartonella quintana (strain Toulouse) (Rochalimaea quintana).